Reading from the N-terminus, the 203-residue chain is Protein GrpE (203 aa).

The span at 1–10 (MSNESIKAEQ) shows a compositional bias: basic and acidic residues. A disordered region spans residues 1–20 (MSNESIKAEQDLIQEGVESE).

This sequence belongs to the GrpE family. In terms of assembly, homodimer.

It is found in the cytoplasm. Functionally, participates actively in the response to hyperosmotic and heat shock by preventing the aggregation of stress-denatured proteins, in association with DnaK and GrpE. It is the nucleotide exchange factor for DnaK and may function as a thermosensor. Unfolded proteins bind initially to DnaJ; upon interaction with the DnaJ-bound protein, DnaK hydrolyzes its bound ATP, resulting in the formation of a stable complex. GrpE releases ADP from DnaK; ATP binding to DnaK triggers the release of the substrate protein, thus completing the reaction cycle. Several rounds of ATP-dependent interactions between DnaJ, DnaK and GrpE are required for fully efficient folding. This Shewanella sp. (strain MR-7) protein is Protein GrpE.